The following is a 715-amino-acid chain: Probable serine/threonine-protein kinase mkcE (715 aa).

3 disordered regions span residues 1 to 125 (MQKI…SQHQ), 228 to 330 (QLQQ…TTTT), and 366 to 385 (GVDN…PIQP). A compositionally biased stretch (gly residues) spans 42-53 (YDGGGSGSGSGG). Composition is skewed to low complexity over residues 54–70 (SSSN…TGGN) and 80–125 (SPSN…SQHQ). The stretch at 207–241 (TGKKNFQQQQLQQLQQQQQQQQLQQQQHQQHNHQI) forms a coiled coil. The span at 367 to 378 (VDNLSSTTTSLS) shows a compositional bias: low complexity. Positions 427 to 683 (RIGENAEVKG…PTQLLQHPFI (257 aa)) constitute a Protein kinase domain. Residues 433–441 (EVKGAFGTV) and Lys-459 each bind ATP. The active-site Proton acceptor is Asp-550.

The protein belongs to the protein kinase superfamily. STE Ser/Thr protein kinase family. STE20 subfamily. It depends on Mg(2+) as a cofactor.

The enzyme catalyses L-seryl-[protein] + ATP = O-phospho-L-seryl-[protein] + ADP + H(+). It carries out the reaction L-threonyl-[protein] + ATP = O-phospho-L-threonyl-[protein] + ADP + H(+). The protein is Probable serine/threonine-protein kinase mkcE of Dictyostelium discoideum (Social amoeba).